Consider the following 211-residue polypeptide: Small ribosomal subunit protein uS3 (211 aa).

The KH type-2 domain occupies 38–106; that stretch reads LRKFIKKAFY…NIELNIIEVK (69 aa).

Belongs to the universal ribosomal protein uS3 family. In terms of assembly, part of the 30S ribosomal subunit. Forms a tight complex with proteins S10 and S14.

Functionally, binds the lower part of the 30S subunit head. Binds mRNA in the 70S ribosome, positioning it for translation. The sequence is that of Small ribosomal subunit protein uS3 from Ehrlichia ruminantium (strain Gardel).